Consider the following 182-residue polypeptide: ATP-dependent protease subunit HslV (182 aa).

The active site involves Thr7. Na(+) contacts are provided by Gly162, Cys165, and Thr168.

It belongs to the peptidase T1B family. HslV subfamily. As to quaternary structure, a double ring-shaped homohexamer of HslV is capped on each side by a ring-shaped HslU homohexamer. The assembly of the HslU/HslV complex is dependent on binding of ATP.

It is found in the cytoplasm. It carries out the reaction ATP-dependent cleavage of peptide bonds with broad specificity.. Allosterically activated by HslU binding. Functionally, protease subunit of a proteasome-like degradation complex believed to be a general protein degrading machinery. This is ATP-dependent protease subunit HslV from Legionella pneumophila (strain Lens).